We begin with the raw amino-acid sequence, 204 residues long: Peptide deformylase (204 aa).

Residues Cys131 and His174 each contribute to the Fe cation site. Glu175 is an active-site residue. His178 is a Fe cation binding site.

The protein belongs to the polypeptide deformylase family. It depends on Fe(2+) as a cofactor.

It catalyses the reaction N-terminal N-formyl-L-methionyl-[peptide] + H2O = N-terminal L-methionyl-[peptide] + formate. Its function is as follows. Removes the formyl group from the N-terminal Met of newly synthesized proteins. Requires at least a dipeptide for an efficient rate of reaction. N-terminal L-methionine is a prerequisite for activity but the enzyme has broad specificity at other positions. This chain is Peptide deformylase, found in Streptococcus gordonii (strain Challis / ATCC 35105 / BCRC 15272 / CH1 / DL1 / V288).